We begin with the raw amino-acid sequence, 556 residues long: MKTDIEIAQSIELKPIVDVVEKLGISYDDLELYGKYKAKLSFDKIRAVESNPVGKLILVTAINPTPAGEGKSTLTIGLADALNKIGKKTMIAIREPSLGPVMGIKGGAAGGGYAQVLPMEDINLHFTGDMHAITTANNALSALIDNHLHQGNELEIDQRRILWKRVVDLNDRALRHVTVGLGGPLNGIPREDGFDITVASEIMAILCLATDIEDLKRRLANIVIGYRYDRTPVSVGDLQVEGALALILKDAIKPNLVQTIYGTPAFVHGGPFANIAHGCNSVLATTTALHLADYTVTEAGFGADLGAEKFLDIKTPNLPTSPDAVVIVATLRALKMNGGVAKDALTEENVEAVRAGFANLKRHVENIRKFGIPAVVAINEFVSDTEAEIAVLKELCASIDVPVELASVWADGAEGGVALAETVVKTIAENPANYKRLYDNALSVQEKIEKIVTEIYRGSKVNFEKKAQTQIAQIVQNGWDKLPICMAKTQYSFSDNPNALGAPENFEITIRELVPKLGAGFIVALTGDVMTMPGLPKRPAALNMDVESDGTVLGLF.

65–72 (TPAGEGKS) provides a ligand contact to ATP.

Belongs to the formate--tetrahydrofolate ligase family.

It carries out the reaction (6S)-5,6,7,8-tetrahydrofolate + formate + ATP = (6R)-10-formyltetrahydrofolate + ADP + phosphate. It functions in the pathway one-carbon metabolism; tetrahydrofolate interconversion. The chain is Formate--tetrahydrofolate ligase from Streptococcus pneumoniae (strain JJA).